The following is a 36-amino-acid chain: Photosystem I reaction center subunit VIII (36 aa).

A helical membrane pass occupies residues 9 to 29 (ILVPLVGLVFPAITMVSLFLY).

The protein belongs to the PsaI family.

It is found in the plastid. The protein resides in the chloroplast thylakoid membrane. Functionally, may help in the organization of the PsaL subunit. The protein is Photosystem I reaction center subunit VIII of Zygnema circumcarinatum (Green alga).